Reading from the N-terminus, the 189-residue chain is Ribosome maturation factor RimM (189 aa).

Residues 110–189 (DDEYYWKDLI…TVTVDWDPNF (80 aa)) form the PRC barrel domain.

The protein belongs to the RimM family. As to quaternary structure, binds ribosomal protein uS19.

The protein resides in the cytoplasm. In terms of biological role, an accessory protein needed during the final step in the assembly of 30S ribosomal subunit, possibly for assembly of the head region. Essential for efficient processing of 16S rRNA. May be needed both before and after RbfA during the maturation of 16S rRNA. It has affinity for free ribosomal 30S subunits but not for 70S ribosomes. This is Ribosome maturation factor RimM from Blochmanniella pennsylvanica (strain BPEN).